A 271-amino-acid chain; its full sequence is Probable protein VP2 (271 aa).

3 disordered regions span residues 49 to 103, 124 to 146, and 203 to 271; these read GGPP…DAAA, QCSNRRSKTRARRTDGPPTPIDT, and LQQR…RVST. Over residues 50–61 the composition is skewed to pro residues; the sequence is GPPPPGGPPPGT. Residues 87–99 are compositionally biased toward gly residues; the sequence is GEGGAAGPPGAGG. Residues 207 to 216 are compositionally biased toward basic and acidic residues; it reads QQRESSESPK. The segment covering 217-238 has biased composition (basic residues); it reads KAHIQRKKGRKPLQKSRRRRRQ. Residues 239 to 259 are compositionally biased toward low complexity; that stretch reads YSSSSDDSESSGSSSSSSNSS.

In terms of processing, phosphorylated at C-terminal serines.

This is Probable protein VP2 from Torque teno virus (isolate Human/Japan/SANBAN/1999) (TTV).